Reading from the N-terminus, the 446-residue chain is Enolase (446 aa).

Positions 164 and 173 each coordinate substrate. Glu-216 acts as the Proton donor in catalysis. Residues Asp-251, Glu-302, and Asp-329 each coordinate Mg(2+). Substrate is bound by residues Glu-302 and Asp-329. The Proton acceptor role is filled by Lys-354. Substrate is bound by residues 381-384 (SHRS) and Lys-405.

The protein belongs to the enolase family. As to quaternary structure, homodimer. Mg(2+) is required as a cofactor.

The protein localises to the cytoplasm. The enzyme catalyses (2R)-2-phosphoglycerate = phosphoenolpyruvate + H2O. The protein operates within carbohydrate degradation; glycolysis; pyruvate from D-glyceraldehyde 3-phosphate: step 4/5. This chain is Enolase (ENO1), found in Oryza sativa subsp. japonica (Rice).